The chain runs to 238 residues: Cysteine-rich venom protein kaouthin-2 (238 aa).

The first 19 residues, 1–19 (MIAFIVLLSLAAVLQQSSG), serve as a signal peptide directing secretion. The propeptide occupies 20–25 (TVDFAS). Residues 38–164 (VDKHNALRRS…SSKYLYVCQY (127 aa)) enclose the SCP domain. Intrachain disulfides connect Cys75-Cys153, Cys92-Cys165, Cys148-Cys162, Cys184-Cys191, Cys187-Cys196, Cys200-Cys233, Cys209-Cys227, and Cys218-Cys231. The ShKT domain maps to 200 to 233 (CKHHNVFSNCQSLAKQNACQTEWMKSKCAASCFC).

As to expression, expressed by the venom gland.

The protein localises to the secreted. This chain is Cysteine-rich venom protein kaouthin-2, found in Naja kaouthia (Monocled cobra).